Reading from the N-terminus, the 133-residue chain is Nucleoside diphosphate kinase (133 aa).

Positions 9, 57, 85, 91, 102, and 112 each coordinate ATP. H115 acts as the Pros-phosphohistidine intermediate in catalysis.

Belongs to the NDK family. It depends on Mg(2+) as a cofactor.

It is found in the cytoplasm. It carries out the reaction a 2'-deoxyribonucleoside 5'-diphosphate + ATP = a 2'-deoxyribonucleoside 5'-triphosphate + ADP. The catalysed reaction is a ribonucleoside 5'-diphosphate + ATP = a ribonucleoside 5'-triphosphate + ADP. In terms of biological role, major role in the synthesis of nucleoside triphosphates other than ATP. The ATP gamma phosphate is transferred to the NDP beta phosphate via a ping-pong mechanism, using a phosphorylated active-site intermediate. In Methanococcus maripaludis (strain DSM 14266 / JCM 13030 / NBRC 101832 / S2 / LL), this protein is Nucleoside diphosphate kinase.